The following is a 75-amino-acid chain: Caerin 1.11 (75 aa).

Positions Met1–Cys22 are cleaved as a signal peptide. The propeptide occupies Glu23–Arg49. Residues Glu24–Lys48 are disordered. Over residues Asp30 to Ser45 the composition is skewed to acidic residues. Leu74 carries the post-translational modification Leucine amide.

Belongs to the frog skin active peptide (FSAP) family. Caerin subfamily. In terms of tissue distribution, expressed by the skin glands.

The protein resides in the secreted. It is found in the target cell membrane. Its function is as follows. Cationic amphipathic alpha-helical antimicrobial peptide with weak or no activity against both Gram-positive and Gram-negative bacteria. Is weakly active against E.coli (MIC=25 uM), E.cloacae (MIC=50 uM), K.pneumoniae (MIC=25 uM), and S.haemolyticus (MIC=50 uM). Has no activity against S.typhimurium, S.enteritidis, B.megaterium, and S.aureus (MIC&gt;100 uM). The protein is Caerin 1.11 of Ranoidea caerulea (Green tree frog).